The chain runs to 108 residues: MNLLELSCTPQHGQSPLADNTVKQLLSTLPDWEIVGIELRKTYRFANYHETMAFVNALAWIANQEDHHPDMSVHYNRAVVNFSTHDAGGLTLNDFICAAKTEALFRRP.

The protein belongs to the pterin-4-alpha-carbinolamine dehydratase family.

It catalyses the reaction (4aS,6R)-4a-hydroxy-L-erythro-5,6,7,8-tetrahydrobiopterin = (6R)-L-erythro-6,7-dihydrobiopterin + H2O. The polypeptide is Putative pterin-4-alpha-carbinolamine dehydratase (Chromobacterium violaceum (strain ATCC 12472 / DSM 30191 / JCM 1249 / CCUG 213 / NBRC 12614 / NCIMB 9131 / NCTC 9757 / MK)).